The primary structure comprises 149 residues: D-aminoacyl-tRNA deacylase (149 aa).

Positions 137–138 (GP) match the Gly-cisPro motif, important for rejection of L-amino acids motif.

It belongs to the DTD family. Homodimer.

The protein localises to the cytoplasm. It carries out the reaction glycyl-tRNA(Ala) + H2O = tRNA(Ala) + glycine + H(+). It catalyses the reaction a D-aminoacyl-tRNA + H2O = a tRNA + a D-alpha-amino acid + H(+). An aminoacyl-tRNA editing enzyme that deacylates mischarged D-aminoacyl-tRNAs. Also deacylates mischarged glycyl-tRNA(Ala), protecting cells against glycine mischarging by AlaRS. Acts via tRNA-based rather than protein-based catalysis; rejects L-amino acids rather than detecting D-amino acids in the active site. By recycling D-aminoacyl-tRNA to D-amino acids and free tRNA molecules, this enzyme counteracts the toxicity associated with the formation of D-aminoacyl-tRNA entities in vivo and helps enforce protein L-homochirality. In Desulfotalea psychrophila (strain LSv54 / DSM 12343), this protein is D-aminoacyl-tRNA deacylase.